The primary structure comprises 417 residues: Multifunctional CCA protein (417 aa).

Residues glycine 8 and arginine 11 each contribute to the ATP site. Glycine 8 and arginine 11 together coordinate CTP. The Mg(2+) site is built by aspartate 21 and aspartate 23. Arginine 91, arginine 143, and arginine 146 together coordinate ATP. CTP is bound by residues arginine 91, arginine 143, and arginine 146. An HD domain is found at 232–333 (TGVHVMMVVD…VRLFERSDAL (102 aa)).

This sequence belongs to the tRNA nucleotidyltransferase/poly(A) polymerase family. Bacterial CCA-adding enzyme type 1 subfamily. As to quaternary structure, monomer. Can also form homodimers and oligomers. It depends on Mg(2+) as a cofactor. Requires Ni(2+) as cofactor.

The enzyme catalyses a tRNA precursor + 2 CTP + ATP = a tRNA with a 3' CCA end + 3 diphosphate. It carries out the reaction a tRNA with a 3' CCA end + 2 CTP + ATP = a tRNA with a 3' CCACCA end + 3 diphosphate. Its function is as follows. Catalyzes the addition and repair of the essential 3'-terminal CCA sequence in tRNAs without using a nucleic acid template. Adds these three nucleotides in the order of C, C, and A to the tRNA nucleotide-73, using CTP and ATP as substrates and producing inorganic pyrophosphate. tRNA 3'-terminal CCA addition is required both for tRNA processing and repair. Also involved in tRNA surveillance by mediating tandem CCA addition to generate a CCACCA at the 3' terminus of unstable tRNAs. While stable tRNAs receive only 3'-terminal CCA, unstable tRNAs are marked with CCACCA and rapidly degraded. This chain is Multifunctional CCA protein, found in Paraburkholderia phymatum (strain DSM 17167 / CIP 108236 / LMG 21445 / STM815) (Burkholderia phymatum).